The sequence spans 463 residues: Chromosomal replication initiator protein DnaA (463 aa).

The domain I, interacts with DnaA modulators stretch occupies residues 1 to 83; it reads MSTNQIILTD…LQLFQHYNNT (83 aa). Residues 83–124 are domain II; it reads TIKSVEIITKELPGTSKTVIELPTKTFADIGSSELNAENIFS. Residues 125 to 343 are domain III, AAA+ region; it reads TLDVRFTFDN…GALNKVIAHS (219 aa). 4 residues coordinate ATP: glycine 171, glycine 173, lysine 174, and threonine 175. The domain IV, binds dsDNA stretch occupies residues 344-463; it reads NFTLKEITLE…INLLMKILQN (120 aa).

The protein belongs to the DnaA family. In terms of assembly, oligomerizes as a right-handed, spiral filament on DNA at oriC.

The protein resides in the cytoplasm. Its function is as follows. Plays an essential role in the initiation and regulation of chromosomal replication. ATP-DnaA binds to the origin of replication (oriC) to initiate formation of the DNA replication initiation complex once per cell cycle. Binds the DnaA box (a 9 base pair repeat at the origin) and separates the double-stranded (ds)DNA. Forms a right-handed helical filament on oriC DNA; dsDNA binds to the exterior of the filament while single-stranded (ss)DNA is stabiized in the filament's interior. The ATP-DnaA-oriC complex binds and stabilizes one strand of the AT-rich DNA unwinding element (DUE), permitting loading of DNA polymerase. After initiation quickly degrades to an ADP-DnaA complex that is not apt for DNA replication. Binds acidic phospholipids. The sequence is that of Chromosomal replication initiator protein DnaA from Rickettsia canadensis (strain McKiel).